A 146-amino-acid chain; its full sequence is Protein archease (146 aa).

Ca(2+) is bound by residues D16, D145, and I146.

It belongs to the archease family.

Its function is as follows. Activates the tRNA-splicing ligase complex by facilitating the enzymatic turnover of catalytic subunit RtcB. Acts by promoting the guanylylation of RtcB, a key intermediate step in tRNA ligation. Can also alter the NTP specificity of RtcB such that ATP, dGTP or ITP is used efficiently. The chain is Protein archease from Methanosarcina barkeri (strain Fusaro / DSM 804).